Here is a 167-residue protein sequence, read N- to C-terminus: CKLF-like MARVEL transmembrane domain-containing protein 7 (167 aa).

The region spanning Y32–C158 is the MARVEL domain. Transmembrane regions (helical) follow at residues T35 to V55, F69 to F89, L102 to I122, and L132 to L152.

The protein belongs to the chemokine-like factor family.

It localises to the membrane. This Mus musculus (Mouse) protein is CKLF-like MARVEL transmembrane domain-containing protein 7 (Cmtm7).